A 156-amino-acid chain; its full sequence is Small ribosomal subunit protein uS7c (156 aa).

It belongs to the universal ribosomal protein uS7 family. As to quaternary structure, part of the 30S ribosomal subunit.

The protein localises to the plastid. The protein resides in the chloroplast. Its function is as follows. One of the primary rRNA binding proteins, it binds directly to 16S rRNA where it nucleates assembly of the head domain of the 30S subunit. This Ostreococcus tauri protein is Small ribosomal subunit protein uS7c (rps7).